Reading from the N-terminus, the 348-residue chain is GDSL esterase/lipase At4g30140 (348 aa).

The signal sequence occupies residues 1-28 (MVEGESKALWIILATVFAVAAVAPAVHG). Serine 40 (nucleophile) is an active-site residue. Catalysis depends on residues aspartate 316 and histidine 319. Asparagine 342 is a glycosylation site (N-linked (GlcNAc...) asparagine).

The protein belongs to the 'GDSL' lipolytic enzyme family.

It localises to the secreted. This Arabidopsis thaliana (Mouse-ear cress) protein is GDSL esterase/lipase At4g30140.